Here is a 363-residue protein sequence, read N- to C-terminus: Chorismate synthase (363 aa).

NADP(+)-binding residues include Arg-48 and Arg-54. Residues 125–127 (RSS), 237–238 (NA), Gly-277, 292–296 (KPTSS), and Arg-318 each bind FMN.

This sequence belongs to the chorismate synthase family. As to quaternary structure, homotetramer. FMNH2 serves as cofactor.

It catalyses the reaction 5-O-(1-carboxyvinyl)-3-phosphoshikimate = chorismate + phosphate. It functions in the pathway metabolic intermediate biosynthesis; chorismate biosynthesis; chorismate from D-erythrose 4-phosphate and phosphoenolpyruvate: step 7/7. Its function is as follows. Catalyzes the anti-1,4-elimination of the C-3 phosphate and the C-6 proR hydrogen from 5-enolpyruvylshikimate-3-phosphate (EPSP) to yield chorismate, which is the branch point compound that serves as the starting substrate for the three terminal pathways of aromatic amino acid biosynthesis. This reaction introduces a second double bond into the aromatic ring system. This Pseudomonas entomophila (strain L48) protein is Chorismate synthase.